A 90-amino-acid chain; its full sequence is Probable Fe(2+)-trafficking protein (90 aa).

The protein belongs to the Fe(2+)-trafficking protein family.

Could be a mediator in iron transactions between iron acquisition and iron-requiring processes, such as synthesis and/or repair of Fe-S clusters in biosynthetic enzymes. The chain is Probable Fe(2+)-trafficking protein from Coxiella burnetii (strain CbuK_Q154) (Coxiella burnetii (strain Q154)).